Reading from the N-terminus, the 561-residue chain is Acylcarnitine hydrolase (561 aa).

A signal peptide spans 1 to 26; the sequence is MARKQPHSWLNAVLFGLLLILIHVWG. Residues C97 and C125 are joined by a disulfide bond. Residue S230 is the Acyl-ester intermediate of the active site. C282 and C293 are oxidised to a cystine. Residues E347 and H459 each act as charge relay system in the active site.

It belongs to the type-B carboxylesterase/lipase family. Expressed in liver, stomach and kidney.

Its subcellular location is the microsome. The protein resides in the endoplasmic reticulum. It catalyses the reaction all-trans-retinyl hexadecanoate + H2O = all-trans-retinol + hexadecanoate + H(+). The catalysed reaction is an O-acyl-(R)-carnitine + H2O = (R)-carnitine + a fatty acid + H(+). In terms of biological role, hydrolase with high activity towards palmitoylcarnitine. Is also active with p-nitrophenylacetate and alpha-naphthylacetate. May also hydrolyze retinyl esters. This Rattus norvegicus (Rat) protein is Acylcarnitine hydrolase.